Reading from the N-terminus, the 641-residue chain is SUMO-activating enzyme subunit 2-B (641 aa).

ATP-binding positions include 24–29 (GAGGIG), D48, 56–59 (NLNR), K72, 95–96 (SI), and 117–122 (DNNAAR). Residues C158 and C161 each coordinate Zn(2+). C173 (glycyl thioester intermediate) is an active-site residue. 2 residues coordinate Zn(2+): C439 and C442. The segment at 546 to 641 (GDVPEKGPQK…EEDDDIIALD (96 aa)) is disordered. Residues 548 to 561 (VPEKGPQKPPEESV) show a composition bias toward basic and acidic residues. Residues 562–579 (KNITNGSDDGAQPSTSKA) are compositionally biased toward polar residues. Composition is skewed to acidic residues over residues 582 to 594 (QDDV…DEES) and 630 to 641 (PVEEDDDIIALD).

It belongs to the ubiquitin-activating E1 family. Heterodimer of sae1 and uba2/sae2. The heterodimer corresponds to the two domains that are encoded on a single polypeptide chain in ubiquitin-activating enzyme E1. Interacts with ube2i.

The protein localises to the nucleus. It functions in the pathway protein modification; protein sumoylation. The heterodimer acts as an E1 ligase for sumo1, sumo2, and sumo3. It mediates ATP-dependent activation of sumo proteins followed by formation of a thioester bond between a sumo protein and a conserved active site cysteine residue on uba2/sae2. The polypeptide is SUMO-activating enzyme subunit 2-B (uba2-b) (Xenopus laevis (African clawed frog)).